The following is a 62-amino-acid chain: Large ribosomal subunit protein bL28 (62 aa).

It belongs to the bacterial ribosomal protein bL28 family.

This chain is Large ribosomal subunit protein bL28, found in Helicobacter pylori (strain HPAG1).